We begin with the raw amino-acid sequence, 261 residues long: Triosephosphate isomerase (261 aa).

A substrate-binding site is contributed by 10–12 (NWK). Residue His-100 is the Electrophile of the active site. Glu-172 (proton acceptor) is an active-site residue. Substrate is bound by residues Gly-178, Ser-218, and 239-240 (GG).

This sequence belongs to the triosephosphate isomerase family. Homodimer.

The protein resides in the cytoplasm. The catalysed reaction is D-glyceraldehyde 3-phosphate = dihydroxyacetone phosphate. Its pathway is carbohydrate biosynthesis; gluconeogenesis. It functions in the pathway carbohydrate degradation; glycolysis; D-glyceraldehyde 3-phosphate from glycerone phosphate: step 1/1. Involved in the gluconeogenesis. Catalyzes stereospecifically the conversion of dihydroxyacetone phosphate (DHAP) to D-glyceraldehyde-3-phosphate (G3P). This Mycolicibacterium paratuberculosis (strain ATCC BAA-968 / K-10) (Mycobacterium paratuberculosis) protein is Triosephosphate isomerase.